A 369-amino-acid chain; its full sequence is MWPLWLVASLLALSQALPFEQKGFWDFTLDDGLPMLNDEEASGAETTSGVPDLDALTPTYSAMCPFGCHCHLRVVQCSDLGLKAVPKEISPDTMLLDLQNNDISELRADDFKGLHHLYALVLVNNKISKIHEKAFSPLRKLQKLYISKNHLVEIPPNLPSSLVELRIHDNRIRKVPKGVFSGLRNMNCIEMGGNPLENSGFEPGAFDGLKLNYLRISEAKLTGIPKDLPETLNELHLDHNKIQAIELEDLLRYSKLYRLGLGHNQIRMIENGSLSFLPTLRELHLDNNKLSRVPSGLPDLKLLQVVYLHTNNITKVGVNDFCPVGFGVKRAYYNGISLFNNPVPYWEVQPATFRCVTDRLAIQFGNYKK.

The N-terminal stretch at 1–16 is a signal peptide; that stretch reads MWPLWLVASLLALSQA. Residues 17 to 37 constitute a propeptide that is removed on maturation; the sequence is LPFEQKGFWDFTLDDGLPMLN. 2 O-linked (Xyl...) (glycosaminoglycan) serine glycosylation sites follow: Ser42 and Ser48. 2 cysteine pairs are disulfide-bonded: Cys64/Cys70 and Cys68/Cys77. 12 LRR repeats span residues 83–103, 104–127, 128–151, 152–172, 173–196, 197–221, 222–242, 243–266, 267–290, 291–313, 314–343, and 344–369; these read KAVPKEISPDTMLLDLQNNDI, SELRADDFKGLHHLYALVLVNNKI, SKIHEKAFSPLRKLQKLYISKNHL, VEIPPNLPSSLVELRIHDNRI, RKVPKGVFSGLRNMNCIEMGGNPL, ENSGFEPGAFDGLKLNYLRISEAKL, TGIPKDLPETLNELHLDHNKI, QAIELEDLLRYSKLYRLGLGHNQI, RMIENGSLSFLPTLRELHLDNNKL, SRVPSGLPDLKLLQVVYLHTNNI, TKVGVNDFCPVGFGVKRAYYNGISLFNNPV, and PYWEVQPATFRCVTDRLAIQFGNYKK. 2 N-linked (GlcNAc...) asparagine glycosylation sites follow: Asn271 and Asn312. A disulfide bridge links Cys322 with Cys355.

Belongs to the small leucine-rich proteoglycan (SLRP) family. SLRP class I subfamily. As to quaternary structure, homodimer. Forms a ternary complex with MFAP2 and ELN. Post-translationally, the two attached glycosaminoglycan chains can be either chondroitin sulfate or dermatan sulfate.

It localises to the secreted. The protein localises to the extracellular space. It is found in the extracellular matrix. In terms of biological role, may be involved in collagen fiber assembly. The sequence is that of Biglycan (BGN) from Canis lupus familiaris (Dog).